A 374-amino-acid polypeptide reads, in one-letter code: Organelle RRM domain-containing protein 1, chloroplastic (374 aa).

The N-terminal 54 residues, M1–S54, are a transit peptide targeting the chloroplast. Residues K258 to Q271 show a composition bias toward basic and acidic residues. The tract at residues K258–V279 is disordered. Residues K282 to T360 enclose the RRM domain.

Interacts with PCMP-H51/CRR28 and PCMP-H12/OTP82. Interacts with MORF8/RIP1, MORF2/RIP2 and VAR3/OZ1.

The protein resides in the plastid. The protein localises to the chloroplast. In terms of biological role, involved in C-to-U editing of chloroplastic RNA. Functions as major chloroplastic editing factor. Controls 62 percent of the chloroplastic editing sites. Binds RNA close to ORRM1-dependent editing sites in vitro. Binds the editing recognition trans-factors PCMP-H51/CRR28 and PCMP-H12/OTP82. This Arabidopsis thaliana (Mouse-ear cress) protein is Organelle RRM domain-containing protein 1, chloroplastic.